The sequence spans 430 residues: MTQLEMARQGIVSDKMKQAAADAGIDAEILRQRIAEGTAIVCHNNMHANGRPLAVGKGLPTRVNANIGTSKDDTSIDNELEKARVAVAAGADAIMDLSTGGPIDEIRRAIIAETQACIGSVPLYQAACDTVVKKGKAIVDMTADEIFDGIKKHLDDGVDFITVHCGVTLSTVERMDNEGRIMDVVSRGGSFTVAWMTHNNAENPLYEQYDRLLELVKPYDATLSLGDGFRPGCLADATDRAQIHELIILGELTQRAWDAGIQVMIEGPGHVPLNQIEANIQLQKSLCHGAPFYVLGPLVTDIAPGYDHITCAIGGAVAAGAGADFLCYVTPSEHLCLPNVQDVHDGVMATRIAAHAADIVKGLPGAMEKDIAMSKARKGLDWETQYCLAIDPELARKRRGESGVDEEHGACTMCGEFCAYKVMDERKPKQ.

Substrate is bound by residues N66, M95, Y124, H164, 186–188 (SRG), 227–230 (DGFR), and E266. H270 lines the Zn(2+) pocket. Y293 is a binding site for substrate. Residue H334 participates in Zn(2+) binding. Positions 411, 414, and 418 each coordinate [4Fe-4S] cluster.

The protein belongs to the ThiC family. In terms of assembly, homodimer. The cofactor is [4Fe-4S] cluster.

The catalysed reaction is 5-amino-1-(5-phospho-beta-D-ribosyl)imidazole + S-adenosyl-L-methionine = 4-amino-2-methyl-5-(phosphooxymethyl)pyrimidine + CO + 5'-deoxyadenosine + formate + L-methionine + 3 H(+). Its pathway is cofactor biosynthesis; thiamine diphosphate biosynthesis. Its function is as follows. Catalyzes the synthesis of the hydroxymethylpyrimidine phosphate (HMP-P) moiety of thiamine from aminoimidazole ribotide (AIR) in a radical S-adenosyl-L-methionine (SAM)-dependent reaction. This is Phosphomethylpyrimidine synthase 2 from Syntrophotalea carbinolica (strain DSM 2380 / NBRC 103641 / GraBd1) (Pelobacter carbinolicus).